A 1040-amino-acid chain; its full sequence is MRNNTAFEQFTLNPCEQIPLDDKHNIGFNKNNTPDYSSSASSDQLLKNDINRHEMERRIAFLNRKQALFNAFMHDSSSSLNTMESNIEKVNGLFPNDNSVIALKPNEEKLNSSLSVENNDSTYTDATLIAPKIGLDRPNINAITIDVDGHSLQNEISSSTDKLSPSQSDALFEQKQDSLFWNDNAVIVVSDSESDDNNVRTKSSLNDHDKVNMKEKRNLELAFMNSKRKKLELPSLPVLSTAGPSYTNSLALPPFHHHNNYKMFNTTHTLEDDKFLQGKGTSNNPISLSDEEDNEINFQNKRYGSDSVILPGGLLHDSKLPEPGKHLFHLQWYHDRFHNIEGFNLSDSNNQKVQDDQQQQLEELFKDLDEQLVNDPTIREGTPAGLIPTLMEHQKEGLMWLKRLEESSKKGGILADDMGLGKTVQALALLVTRPPESKSVKTTLIITPVSLLQQWHNEILTKIAPSHRPTVYIHHGSSKKHKIAEQLMSYDIVLTTYNVIAYEFKNKMAYDKSIEDNAPIKKFEHLPFFEAEWYRVILDEAQTIKNRNTLAARGCCLLESTYRWCLSGTPMQNGVEEFYSLIKFLRIKPYSDWSSFSKDFTIPLSSNINTSAPMKRFRGLLKAVLLRRTKNTKIDGKPILTLPPKTAVKSETDLSSSEMEFYNTLQSGAQIQMRKYLQEGTITTHYGSLLVLLLRLRQACCHPWLIVAREAAVDDNDSFQAKNRAIYNQIYPEAVNRLKLIETLQCSLCMDVVAELLIIVPCGHFLCRECLTHVITSSEDMAKQTSNENISPKCSVCEEYIDTERLLSYALFRRYSGMAPIVDADNKLRTENISELLPKQYSNILENRQMGMKIFTDPKHWTTSTKIEKALNAVKEIIKKQPTDKILIFSQFVSFLELFTVPFRQEGIKYLMYTGGLSTAERNQALINFEVDPNVRVLLISLKAGNVGLNLTCANHVIILDPFWNPYIEEQAVDRAHRIGQDKPVNILRIVTNNTIEERVLALQDRKRELIDSALGEKGLREISRLNTKELSFLFGMSSR.

The region spanning 403 to 588 (RLEESSKKGG…YSLIKFLRIK (186 aa)) is the Helicase ATP-binding domain. 416 to 423 (DDMGLGKT) contributes to the ATP binding site. The segment at 746 to 798 (CSLCMDVVAELLIIVPCGHFLCRECLTHVITSSEDMAKQTSNENISPKCSVCE) adopts an RING-type zinc-finger fold. Residues 866–1032 (KIEKALNAVK…ISRLNTKELS (167 aa)) enclose the Helicase C-terminal domain.

The protein belongs to the SNF2/RAD54 helicase family.

It is found in the nucleus. This is an uncharacterized protein from Schizosaccharomyces pombe (strain 972 / ATCC 24843) (Fission yeast).